The primary structure comprises 136 residues: Phospholipase A2 (136 aa).

Residues Trp-8, Gly-10, and Gly-12 each coordinate Ca(2+). Cystine bridges form between Cys-9-Cys-31, Cys-30-Cys-70, Cys-37-Cys-63, Cys-61-Cys-95, and Cys-105-Cys-115. N-linked (GlcNAc...) asparagine glycosylation occurs at Asn-16. His-34 is a catalytic residue. Position 35 (Asp-35) interacts with Ca(2+). Asp-64 is a catalytic residue.

This sequence belongs to the phospholipase A2 family. The cofactor is Ca(2+). In terms of tissue distribution, expressed by the venom gland.

The protein localises to the secreted. The enzyme catalyses a 1,2-diacyl-sn-glycero-3-phosphocholine + H2O = a 1-acyl-sn-glycero-3-phosphocholine + a fatty acid + H(+). In terms of biological role, PLA2 catalyzes the calcium-dependent hydrolysis of the 2-acyl groups in 3-sn-phosphoglycerides. This is Phospholipase A2 from Bombus pensylvanicus (American bumblebee).